We begin with the raw amino-acid sequence, 488 residues long: Glutamyl-tRNA(Gln) amidotransferase subunit A (488 aa).

Residues lysine 77 and serine 152 each act as charge relay system in the active site. Serine 176 serves as the catalytic Acyl-ester intermediate.

The protein belongs to the amidase family. GatA subfamily. Heterotrimer of A, B and C subunits.

The enzyme catalyses L-glutamyl-tRNA(Gln) + L-glutamine + ATP + H2O = L-glutaminyl-tRNA(Gln) + L-glutamate + ADP + phosphate + H(+). Its function is as follows. Allows the formation of correctly charged Gln-tRNA(Gln) through the transamidation of misacylated Glu-tRNA(Gln) in organisms which lack glutaminyl-tRNA synthetase. The reaction takes place in the presence of glutamine and ATP through an activated gamma-phospho-Glu-tRNA(Gln). This Streptococcus pneumoniae (strain ATCC 700669 / Spain 23F-1) protein is Glutamyl-tRNA(Gln) amidotransferase subunit A.